The chain runs to 122 residues: Small ribosomal subunit protein uS12 (122 aa).

The interval 1 to 45 is disordered; it reads MPTTNQLVRKERKRQTKKTATPALQGSPQRRGVCTRVSTTTPKKP. Over residues 18-28 the composition is skewed to polar residues; that stretch reads KTATPALQGSP. A 3-methylthioaspartic acid modification is found at aspartate 89.

It belongs to the universal ribosomal protein uS12 family. As to quaternary structure, part of the 30S ribosomal subunit. Contacts proteins S8 and S17. May interact with IF1 in the 30S initiation complex.

With S4 and S5 plays an important role in translational accuracy. Functionally, interacts with and stabilizes bases of the 16S rRNA that are involved in tRNA selection in the A site and with the mRNA backbone. Located at the interface of the 30S and 50S subunits, it traverses the body of the 30S subunit contacting proteins on the other side and probably holding the rRNA structure together. The combined cluster of proteins S8, S12 and S17 appears to hold together the shoulder and platform of the 30S subunit. This Rubrobacter xylanophilus (strain DSM 9941 / JCM 11954 / NBRC 16129 / PRD-1) protein is Small ribosomal subunit protein uS12.